Reading from the N-terminus, the 354-residue chain is tRNA-specific 2-thiouridylase MnmA (354 aa).

ATP contacts are provided by residues 6 to 13 and Leu-33; that span reads LLSGGVDS. Catalysis depends on Cys-100, which acts as the Nucleophile. Residues Cys-100 and Cys-195 are joined by a disulfide bond. Position 123 (Gly-123) interacts with ATP. Residues 145 to 147 are interaction with tRNA; the sequence is KDQ. Catalysis depends on Cys-195, which acts as the Cysteine persulfide intermediate.

Belongs to the MnmA/TRMU family.

Its subcellular location is the cytoplasm. The enzyme catalyses S-sulfanyl-L-cysteinyl-[protein] + uridine(34) in tRNA + AH2 + ATP = 2-thiouridine(34) in tRNA + L-cysteinyl-[protein] + A + AMP + diphosphate + H(+). Functionally, catalyzes the 2-thiolation of uridine at the wobble position (U34) of tRNA, leading to the formation of s(2)U34. This chain is tRNA-specific 2-thiouridylase MnmA, found in Borrelia duttonii (strain Ly).